The following is a 112-amino-acid chain: Ribonuclease P protein component (112 aa).

The protein belongs to the RnpA family. As to quaternary structure, consists of a catalytic RNA component (M1 or rnpB) and a protein subunit.

The catalysed reaction is Endonucleolytic cleavage of RNA, removing 5'-extranucleotides from tRNA precursor.. In terms of biological role, RNaseP catalyzes the removal of the 5'-leader sequence from pre-tRNA to produce the mature 5'-terminus. It can also cleave other RNA substrates such as 4.5S RNA. The protein component plays an auxiliary but essential role in vivo by binding to the 5'-leader sequence and broadening the substrate specificity of the ribozyme. The chain is Ribonuclease P protein component from Clostridium kluyveri (strain ATCC 8527 / DSM 555 / NBRC 12016 / NCIMB 10680 / K1).